A 492-amino-acid polypeptide reads, in one-letter code: RNA helicase CrhR (492 aa).

Positions serine 7 to threonine 35 match the Q motif motif. The region spanning isoleucine 38–valine 207 is the Helicase ATP-binding domain. Position 51-58 (serine 51–threonine 58) interacts with ATP. A DEAD box motif is present at residues aspartate 155–aspartate 158. Residues lysine 234–valine 379 enclose the Helicase C-terminal domain. The disordered stretch occupies residues valine 451–glutamine 492. Positions asparagine 457–glycine 471 are enriched in gly residues.

This sequence belongs to the DEAD box helicase family.

It localises to the cytoplasm. The protein localises to the cell inner membrane. The protein resides in the cellular thylakoid membrane. The catalysed reaction is ATP + H2O = ADP + phosphate + H(+). With respect to regulation, helicase inhibited by the slowly-hydrolyzing ATP analog ATP-gamma-S. Protein is rapidly degraded upon shifting from 20 to 30 degrees Celsius, the degradation machinery is only transiently present in cells grown at 30 degrees Celsius, is inhibited by commercial protease inhibitors and requires full-length protein expression (the N-terminal fragment does not induce proteolysis although it can be degraded by wild-type extract). In terms of biological role, an ATP-dependent bidirectional RNA helicase with RNA-dependent ATPase activity; does not unwind dsDNA, uses only (d)ATP. Also has ATP-dependent RNA annealing activity; concurrent annealing and helicase activity promote strand-exchange activity. In vitro has low helicase processivity, annealing processivity is probably higher. Required for correct cold adaptation, probably by aiding translation of mRNAs required for photosynthesis and electron transport. Probably regulates the cold-shock-inducible expression of the GroESL chaperones. May partially regulate its own expression at both the transcriptional and post-transcriptional level (experiments used a construct expressing a 25 kDa trunacted protein which might have dominant-negative effects); is probably not directly involved in the pathway responsible for mRNA degradation. The chain is RNA helicase CrhR from Synechocystis sp. (strain ATCC 27184 / PCC 6803 / Kazusa).